The following is a 419-amino-acid chain: UDP-N-acetylglucosamine 1-carboxyvinyltransferase (419 aa).

A phosphoenolpyruvate-binding site is contributed by 22 to 23; the sequence is KN. R91 serves as a coordination point for UDP-N-acetyl-alpha-D-glucosamine. The Proton donor role is filled by C115. A 2-(S-cysteinyl)pyruvic acid O-phosphothioketal modification is found at C115. UDP-N-acetyl-alpha-D-glucosamine contacts are provided by residues 120–124, 160–163, D305, and I327; these read RPVDL and KVSV.

Belongs to the EPSP synthase family. MurA subfamily.

The protein resides in the cytoplasm. It catalyses the reaction phosphoenolpyruvate + UDP-N-acetyl-alpha-D-glucosamine = UDP-N-acetyl-3-O-(1-carboxyvinyl)-alpha-D-glucosamine + phosphate. The protein operates within cell wall biogenesis; peptidoglycan biosynthesis. Functionally, cell wall formation. Adds enolpyruvyl to UDP-N-acetylglucosamine. The protein is UDP-N-acetylglucosamine 1-carboxyvinyltransferase of Citrobacter koseri (strain ATCC BAA-895 / CDC 4225-83 / SGSC4696).